The chain runs to 387 residues: Phosphoglycerate kinase (387 aa).

Substrate is bound by residues 21–23 (DLN), R36, 59–62 (HLGR), R113, and R146. ATP-binding positions include K197, E314, and 340–343 (GGDT).

It belongs to the phosphoglycerate kinase family. As to quaternary structure, monomer.

It localises to the cytoplasm. It carries out the reaction (2R)-3-phosphoglycerate + ATP = (2R)-3-phospho-glyceroyl phosphate + ADP. It participates in carbohydrate degradation; glycolysis; pyruvate from D-glyceraldehyde 3-phosphate: step 2/5. This chain is Phosphoglycerate kinase, found in Aliivibrio fischeri (strain MJ11) (Vibrio fischeri).